Reading from the N-terminus, the 183-residue chain is MVMNTDSLALIKNSIKTIPNYPKEGILFRDVTSLLEDPQAYKLTIGLLVEHYKDQGFTKVVGTEARGFLFGAPLALELGIGFVPVRKPGKLPRETISESYELEYGHDVLEIHVDAINAEDKVLVIDDLLATGGTIEATVKLIRQLGGSVNDAAFVISLPDLGGEQRLEKMDLKLVSLCEFEGE.

It belongs to the purine/pyrimidine phosphoribosyltransferase family. Homodimer.

The protein resides in the cytoplasm. The catalysed reaction is AMP + diphosphate = 5-phospho-alpha-D-ribose 1-diphosphate + adenine. It functions in the pathway purine metabolism; AMP biosynthesis via salvage pathway; AMP from adenine: step 1/1. In terms of biological role, catalyzes a salvage reaction resulting in the formation of AMP, that is energically less costly than de novo synthesis. The protein is Adenine phosphoribosyltransferase of Shewanella halifaxensis (strain HAW-EB4).